The chain runs to 514 residues: 2,3-bisphosphoglycerate-independent phosphoglycerate mutase (514 aa).

Mn(2+)-binding residues include Asp14 and Ser64. The Phosphoserine intermediate role is filled by Ser64. Residues His125, 155 to 156, Arg187, Arg193, 263 to 266, and Lys336 contribute to the substrate site; these read RD and RADR. Positions 403, 407, 444, 445, and 463 each coordinate Mn(2+).

This sequence belongs to the BPG-independent phosphoglycerate mutase family. As to quaternary structure, monomer. The cofactor is Mn(2+).

The catalysed reaction is (2R)-2-phosphoglycerate = (2R)-3-phosphoglycerate. It functions in the pathway carbohydrate degradation; glycolysis; pyruvate from D-glyceraldehyde 3-phosphate: step 3/5. Its function is as follows. Catalyzes the interconversion of 2-phosphoglycerate and 3-phosphoglycerate. This Shewanella sp. (strain MR-4) protein is 2,3-bisphosphoglycerate-independent phosphoglycerate mutase.